The chain runs to 28 residues: Fibrinogen alpha chain (28 aa).

Ser3 carries the phosphoserine modification.

As to quaternary structure, heterohexamer; disulfide linked. Contains 2 sets of 3 non-identical chains (alpha, beta and gamma). The 2 heterotrimers are in head to head conformation with the N-termini in a small central domain. Conversion of fibrinogen to fibrin is triggered by thrombin, which cleaves fibrinopeptides A and B from alpha and beta chains, and thus exposes the N-terminal polymerization sites responsible for the formation of the soft clot. The soft clot is converted into the hard clot by factor XIIIA which catalyzes the epsilon-(gamma-glutamyl)lysine cross-linking between gamma chains (stronger) and between alpha chains (weaker) of different monomers. Post-translationally, forms F13A-mediated cross-links between a glutamine and the epsilon-amino group of a lysine residue, forming fibronectin-fibrinogen heteropolymers.

Its subcellular location is the secreted. In terms of biological role, cleaved by the protease thrombin to yield monomers which, together with fibrinogen beta (FGB) and fibrinogen gamma (FGG), polymerize to form an insoluble fibrin matrix. Fibrin has a major function in hemostasis as one of the primary components of blood clots. In addition, functions during the early stages of wound repair to stabilize the lesion and guide cell migration during re-epithelialization. Was originally thought to be essential for platelet aggregation, based on in vitro studies using anticoagulated blood. However, subsequent studies have shown that it is not absolutely required for thrombus formation in vivo. Enhances expression of SELP in activated platelets via an ITGB3-dependent pathway. Maternal fibrinogen is essential for successful pregnancy. Fibrin deposition is also associated with infection, where it protects against IFNG-mediated hemorrhage. May also facilitate the immune response via both innate and T-cell mediated pathways. The protein is Fibrinogen alpha chain (FGA) of Canis lupus familiaris (Dog).